The following is a 37-amino-acid chain: KLPEAYAIFDPLVDVLPVIPVLFFALAFVVQAAVGFR.

Over 1-15 (KLPEAYAIFDPLVDV) the chain is Lumenal. A helical membrane pass occupies residues 16-30 (LPVIPVLFFALAFVV). Topologically, residues 31–37 (QAAVGFR) are cytoplasmic.

It belongs to the PsbK family. In terms of assembly, PSII is composed of 1 copy each of membrane proteins PsbA, PsbB, PsbC, PsbD, PsbE, PsbF, PsbH, PsbI, PsbJ, PsbK, PsbL, PsbM, PsbT, PsbX, PsbY, PsbZ, Psb30/Ycf12, peripheral proteins PsbO, CyanoQ (PsbQ), PsbU, PsbV and a large number of cofactors. It forms dimeric complexes. PSII binds multiple chlorophylls, carotenoids and specific lipids. serves as cofactor.

The protein resides in the cellular thylakoid membrane. Its function is as follows. One of the components of the core complex of photosystem II (PSII). PSII is a light-driven water:plastoquinone oxidoreductase that uses light energy to abstract electrons from H(2)O, generating O(2) and a proton gradient subsequently used for ATP formation. It consists of a core antenna complex that captures photons, and an electron transfer chain that converts photonic excitation into a charge separation. This Thermostichus vulcanus (Synechococcus vulcanus) protein is Photosystem II reaction center protein K.